A 150-amino-acid chain; its full sequence is Cytochrome c oxidase subunit 5A, mitochondrial (150 aa).

Residues 1-41 (MLGAALRRCAVAATSRAGPRGLLHSAPNPGPAAAIQSVRCY) constitute a mitochondrion transit peptide. The short motif at 2-17 (LGAALRRCAVAATSRA) is the SIFI-degron element. An N6-acetyllysine mark is found at K87 and K113. At T141 the chain carries Phosphothreonine.

This sequence belongs to the cytochrome c oxidase subunit 5A family. As to quaternary structure, component of the cytochrome c oxidase (complex IV, CIV), a multisubunit enzyme composed of 14 subunits. The complex is composed of a catalytic core of 3 subunits MT-CO1, MT-CO2 and MT-CO3, encoded in the mitochondrial DNA, and 11 supernumerary subunits COX4I, COX5A, COX5B, COX6A, COX6B, COX6C, COX7A, COX7B, COX7C, COX8 and NDUFA4, which are encoded in the nuclear genome. The complex exists as a monomer or a dimer and forms supercomplexes (SCs) in the inner mitochondrial membrane with NADH-ubiquinone oxidoreductase (complex I, CI) and ubiquinol-cytochrome c oxidoreductase (cytochrome b-c1 complex, complex III, CIII), resulting in different assemblies (supercomplex SCI(1)III(2)IV(1) and megacomplex MCI(2)III(2)IV(2)). Interacts with AFG1L. Interacts with RAB5IF. In terms of processing, in response to mitochondrial stress, the precursor protein is ubiquitinated by the SIFI complex in the cytoplasm before mitochondrial import, leading to its degradation. Within the SIFI complex, UBR4 initiates ubiquitin chain that are further elongated or branched by KCMF1.

The protein localises to the mitochondrion inner membrane. The protein operates within energy metabolism; oxidative phosphorylation. Component of the cytochrome c oxidase, the last enzyme in the mitochondrial electron transport chain which drives oxidative phosphorylation. The respiratory chain contains 3 multisubunit complexes succinate dehydrogenase (complex II, CII), ubiquinol-cytochrome c oxidoreductase (cytochrome b-c1 complex, complex III, CIII) and cytochrome c oxidase (complex IV, CIV), that cooperate to transfer electrons derived from NADH and succinate to molecular oxygen, creating an electrochemical gradient over the inner membrane that drives transmembrane transport and the ATP synthase. Cytochrome c oxidase is the component of the respiratory chain that catalyzes the reduction of oxygen to water. Electrons originating from reduced cytochrome c in the intermembrane space (IMS) are transferred via the dinuclear copper A center (CU(A)) of subunit 2 and heme A of subunit 1 to the active site in subunit 1, a binuclear center (BNC) formed by heme A3 and copper B (CU(B)). The BNC reduces molecular oxygen to 2 water molecules using 4 electrons from cytochrome c in the IMS and 4 protons from the mitochondrial matrix. The polypeptide is Cytochrome c oxidase subunit 5A, mitochondrial (COX5A) (Saguinus labiatus (Red-chested mustached tamarin)).